The chain runs to 649 residues: Acetyl-coenzyme A synthetase (649 aa).

CoA-binding positions include 189 to 192, threonine 311, and asparagine 335; that span reads RGGK. ATP is bound by residues 387–389, 411–416, aspartate 500, and arginine 515; these read GEP and DTWWQT. Residue serine 523 coordinates CoA. ATP is bound at residue arginine 526. The Mg(2+) site is built by valine 537, histidine 539, and valine 542. Arginine 584 lines the CoA pocket. Lysine 609 carries the N6-acetyllysine modification.

It belongs to the ATP-dependent AMP-binding enzyme family. Mg(2+) serves as cofactor. Acetylated. Deacetylation by the SIR2-homolog deacetylase activates the enzyme.

It catalyses the reaction acetate + ATP + CoA = acetyl-CoA + AMP + diphosphate. Functionally, catalyzes the conversion of acetate into acetyl-CoA (AcCoA), an essential intermediate at the junction of anabolic and catabolic pathways. AcsA undergoes a two-step reaction. In the first half reaction, AcsA combines acetate with ATP to form acetyl-adenylate (AcAMP) intermediate. In the second half reaction, it can then transfer the acetyl group from AcAMP to the sulfhydryl group of CoA, forming the product AcCoA. The chain is Acetyl-coenzyme A synthetase from Sinorhizobium medicae (strain WSM419) (Ensifer medicae).